Here is a 389-residue protein sequence, read N- to C-terminus: uncharacterized protein (389 aa).

Disordered stretches follow at residues 119-156, 180-233, 294-321, and 362-389; these read SSLF…GENQ, PTSK…SSMG, SIPS…TSRT, and PEDM…EIKV. A compositionally biased stretch (polar residues) spans 137–155; it reads SPSTINIEKNRHSSNSGEN. Residues 190-204 show a composition bias toward acidic residues; the sequence is DDGDEEDDTDDEGEA.

This is an uncharacterized protein from Caenorhabditis elegans.